The chain runs to 100 residues: Integration host factor subunit alpha (100 aa).

Belongs to the bacterial histone-like protein family. In terms of assembly, heterodimer of an alpha and a beta chain.

This protein is one of the two subunits of integration host factor, a specific DNA-binding protein that functions in genetic recombination as well as in transcriptional and translational control. In Caulobacter vibrioides (strain ATCC 19089 / CIP 103742 / CB 15) (Caulobacter crescentus), this protein is Integration host factor subunit alpha.